The primary structure comprises 90 residues: Large ribosomal subunit protein bL27 (90 aa).

The tract at residues 1 to 20 (MAHKKAGGSSRNGRDSAGKR) is disordered.

It belongs to the bacterial ribosomal protein bL27 family.

The sequence is that of Large ribosomal subunit protein bL27 from Rhodopseudomonas palustris (strain ATCC BAA-98 / CGA009).